The primary structure comprises 573 residues: Glutathione/L-cysteine transport system ATP-binding/permease protein CydC (573 aa).

Over Met-1–Lys-15 the chain is Cytoplasmic. 2 consecutive transmembrane segments (helical) span residues Trp-16 to Leu-36 and Thr-37 to Phe-57. The region spanning Leu-20–Gln-306 is the ABC transmembrane type-1 domain. Residues Asn-58 to Arg-136 lie on the Cytoplasmic side of the membrane. A helical membrane pass occupies residues Val-137–Phe-157. The Periplasmic segment spans residues Leu-158–Thr-161. A helical membrane pass occupies residues Leu-162–Tyr-182. Residues Arg-183–Ala-249 are Cytoplasmic-facing. The helical transmembrane segment at Ile-250–Val-270 threads the bilayer. At Gly-271–Pro-276 the chain is on the periplasmic side. The helical transmembrane segment at Gly-277–Val-297 threads the bilayer. The Cytoplasmic segment spans residues Thr-298 to Leu-573. Residues Leu-339 to Gly-572 form the ABC transporter domain. Gly-373–Ser-380 contacts ATP.

The protein belongs to the ABC transporter superfamily. Cysteine exporter (TC 3.A.1.129.1) family. In terms of assembly, forms a heterodimer with CydD.

The protein resides in the cell inner membrane. The enzyme catalyses L-cysteine(in) + ATP + H2O = L-cysteine(out) + ADP + phosphate + H(+). It catalyses the reaction glutathione(in) + ATP + H2O = glutathione(out) + ADP + phosphate + H(+). Its activity is regulated as follows. ATPase activity is stimulated by various thiol compounds. The presence of heme leads to a further enhancement of thiol-stimulated ATPase activity, although a large excess of heme inhibits activity. Glutathione transport is inhibited by sodium orthovanadate, an inhibitor of ABC-type transport systems, but not by the proton ionophore carbonyl cyanide m-chlorophenylhydrazone (CCCP). Its function is as follows. Part of the ABC transporter complex CydDC that exports the reduced low-molecular-weight thiols cysteine and glutathione to the periplasm. Export of these thiol-containing redox-active molecules may be crucial for redox homeostasis in the periplasm, permitting correct assembly of various respiratory complexes and formation of correct disulfide bonds in periplasmic and secreted proteins. CydC contains transmembrane domains (TMD), which form a pore in the inner membrane, and an ATP-binding domain (NBD), which is responsible for energy generation. Required for the assembly of functional cytochrome bd-type quinol oxidases and periplasmic c-type cytochromes. Overexpression of CydDC under anaerobic conditions also results in the formation of a heme biosynthesis-derived pigment, P-574. CydDC binds heme b, but heme is probably not transported by the complex and instead has a role in regulating ATPase activity. Functionally, conversely, a more recent study suggests an alternative function of CydDC: authors suggest that CydDC does not mediate the export of L-cysteine but rather reduces cytoplasmic L-cystine to L-cysteine. The principle function of CydDC would be to maintain the reduced state of cytoplasmic L-cysteine, thereby providing an important connection between sulfur metabolism, oxidative stress and resistance to antibiotics. The polypeptide is Glutathione/L-cysteine transport system ATP-binding/permease protein CydC (Escherichia coli (strain K12)).